We begin with the raw amino-acid sequence, 278 residues long: Bifunctional protein FolD (278 aa).

Residues G162–G164 and I228 contribute to the NADP(+) site.

It belongs to the tetrahydrofolate dehydrogenase/cyclohydrolase family. Homodimer.

It catalyses the reaction (6R)-5,10-methylene-5,6,7,8-tetrahydrofolate + NADP(+) = (6R)-5,10-methenyltetrahydrofolate + NADPH. The enzyme catalyses (6R)-5,10-methenyltetrahydrofolate + H2O = (6R)-10-formyltetrahydrofolate + H(+). Its pathway is one-carbon metabolism; tetrahydrofolate interconversion. In terms of biological role, catalyzes the oxidation of 5,10-methylenetetrahydrofolate to 5,10-methenyltetrahydrofolate and then the hydrolysis of 5,10-methenyltetrahydrofolate to 10-formyltetrahydrofolate. This chain is Bifunctional protein FolD, found in Hydrogenobaculum sp. (strain Y04AAS1).